A 111-amino-acid chain; its full sequence is Large ribosomal subunit protein uL29 (111 aa).

Residues 1–85 (MTVAKELRQK…TKKTNEAAVN (85 aa)) form a large ribosomal subunit protein uL29 region. The interval 86 to 111 (AWKQHLEANKAKLLKSRAKREDASKK) is unknown.

The protein belongs to the universal ribosomal protein uL29 family.

In Mycoplasma pneumoniae (strain ATCC 29342 / M129 / Subtype 1) (Mycoplasmoides pneumoniae), this protein is Large ribosomal subunit protein uL29.